The sequence spans 112 residues: C-X-C motif chemokine 6 (112 aa).

The signal sequence occupies residues 1 to 36; that stretch reads MRLLSSRAARVSGPSGSLCALLALLLLTPPGPLASA. Intrachain disulfides connect Cys-48–Cys-74 and Cys-50–Cys-90.

It belongs to the intercrine alpha (chemokine CxC) family.

The protein localises to the secreted. Its function is as follows. Chemotactic for neutrophil granulocytes. Signals through binding and activation of its receptors (CXCR1 and CXCR2). In addition to its chemotactic and angiogenic properties, it has strong antibacterial activity against Gram-positive and Gram-negative bacteria (90-fold-higher when compared to CXCL5 and CXCL7). The polypeptide is C-X-C motif chemokine 6 (CXCL6) (Bos taurus (Bovine)).